A 278-amino-acid polypeptide reads, in one-letter code: MKI67 FHA domain-interacting nucleolar phosphoprotein-like (278 aa).

In terms of domain architecture, RRM spans 41–119 (GVIYIGHIPK…RLLKCEFVTP (79 aa)).

It is found in the nucleus. The protein resides in the nucleolus. In Xenopus laevis (African clawed frog), this protein is MKI67 FHA domain-interacting nucleolar phosphoprotein-like (nifk).